Consider the following 148-residue polypeptide: Nickel and cobalt resistance protein CnrR (148 aa).

The first 26 residues, 1 to 26, serve as a signal peptide directing secretion; the sequence is MMKSRTRRLSLSTLFGALLGVSVAAA. Residues 28 to 148 lie on the Periplasmic side of the membrane; the sequence is LYYSHRNEAG…LIDALRRGSQ (121 aa). A coiled-coil region spans residues 54–117; that stretch reads NEREILELKE…AAGDLQRATL (64 aa).

This sequence to A.xylosoxydans NccX.

The protein resides in the periplasm. CnrH alone is able to activate cnr expression, while both CnrY and CrnR (CnrX) are needed for nickel induction of CnrH. Has been suggested to bind nickel. The polypeptide is Nickel and cobalt resistance protein CnrR (cnrR) (Cupriavidus metallidurans (strain ATCC 43123 / DSM 2839 / NBRC 102507 / CH34) (Ralstonia metallidurans)).